The sequence spans 312 residues: Methionyl-tRNA formyltransferase (312 aa).

Position 109–112 (109–112 (SLLP)) interacts with (6S)-5,6,7,8-tetrahydrofolate.

The protein belongs to the Fmt family.

The enzyme catalyses L-methionyl-tRNA(fMet) + (6R)-10-formyltetrahydrofolate = N-formyl-L-methionyl-tRNA(fMet) + (6S)-5,6,7,8-tetrahydrofolate + H(+). Attaches a formyl group to the free amino group of methionyl-tRNA(fMet). The formyl group appears to play a dual role in the initiator identity of N-formylmethionyl-tRNA by promoting its recognition by IF2 and preventing the misappropriation of this tRNA by the elongation apparatus. This chain is Methionyl-tRNA formyltransferase, found in Listeria innocua serovar 6a (strain ATCC BAA-680 / CLIP 11262).